A 229-amino-acid chain; its full sequence is Uracil-DNA glycosylase (229 aa).

Aspartate 67 serves as the catalytic Proton acceptor.

It belongs to the uracil-DNA glycosylase (UDG) superfamily. UNG family.

The protein localises to the cytoplasm. It catalyses the reaction Hydrolyzes single-stranded DNA or mismatched double-stranded DNA and polynucleotides, releasing free uracil.. In terms of biological role, excises uracil residues from the DNA which can arise as a result of misincorporation of dUMP residues by DNA polymerase or due to deamination of cytosine. The chain is Uracil-DNA glycosylase from Coxiella burnetii (strain CbuK_Q154) (Coxiella burnetii (strain Q154)).